A 692-amino-acid chain; its full sequence is Putative clathrin assembly protein At1g14910 (692 aa).

Residues 24–161 enclose the ENTH domain; sequence RVNSDYAELD…ECFRVLKYDI (138 aa). Residues 325 to 383 form a disordered region; that stretch reads YTPDDGLTSEDVGPSHEEHETSSPSDSAVVPSEETQLSSQSPPSVETPQNFIDTDDLLG. The span at 357-376 shows a compositional bias: polar residues; the sequence is EETQLSSQSPPSVETPQNFI. S363 bears the Phosphoserine mark. Repeat unit 1 spans residues 532–548; sequence FGEFPIVPVSEPQSTTS. Residues 532 to 666 form an 8 X 17 AA approximate tandem repeats region; sequence FGEFPIVPVS…PVSEPQNTTG (135 aa). Residues 549–564 form a 2; truncated repeat; it reads FGAFPVPVSEPSNTTG. 6 consecutive repeat copies span residues 565 to 581, 582 to 598, 599 to 615, 616 to 632, 633 to 649, and 650 to 666.

As to expression, expressed in the whole plant.

The protein resides in the membrane. It localises to the clathrin-coated pit. It is found in the golgi apparatus. Its subcellular location is the cytoplasmic vesicle. The protein localises to the clathrin-coated vesicle. The chain is Putative clathrin assembly protein At1g14910 from Arabidopsis thaliana (Mouse-ear cress).